Here is a 630-residue protein sequence, read N- to C-terminus: MRKWRIEDSEELYNITGWGTSYFGINDKGHVVVTPRKDGVAVDLKELVDELQLRDVAAPMLVRFPDILDNRIEKTAYCFKQASEEYGYKAQNFIIYPIKVNQMRPVVEEIISHGKKFNLGLEAGSKPELHAVIAVNTDSDSLIICNGYKDESYIELALLAQKMGKRIFLVVEKMNELKLIARMAKQLNVQPNIGIRIKLASSGSGKWEESGGDASKFGLTSSELLEALDFLESKGMKDCLKLIHFHIGSQVTKIRRIKTALREASQFYVQLHAMGFNVEFVDIGGGLGVDYDGTRSSSSESSVNYSIQEYVNDSISTLVDASDKNGIPHPNIITESGRALTAHHSVLIFEVLETATLPQWDDEEEIAPDAHELVQELYGIWDTLNQNKMLEAWHDAQQIREEALDLFSHGIVDLKTRAQIERLYWSITREINQIAGGLKHAPDEFRGLSKLLADKYFCNFSLFQSLPDSWAIDQIFPIMPIQRLDEKPDRSATLQDITCDSDGKIANFISTRNVAHYMPVHSLKQKEPYYVAVFLVGAYQEILGDMHNLFGDTNAVHVSVNEKGYNIEQIIDGETVAEVLDYVQYSPKKLVRTLETWVTKSVKEGKISVEEGKEFLSNYRSGLYGYTYLE.

At K99 the chain carries N6-(pyridoxal phosphate)lysine. 281-291 contacts substrate; that stretch reads VDIGGGLGVDY.

Belongs to the Orn/Lys/Arg decarboxylase class-II family. SpeA subfamily. Mg(2+) serves as cofactor. It depends on pyridoxal 5'-phosphate as a cofactor.

It carries out the reaction L-arginine + H(+) = agmatine + CO2. It participates in amine and polyamine biosynthesis; agmatine biosynthesis; agmatine from L-arginine: step 1/1. Its function is as follows. Catalyzes the biosynthesis of agmatine from arginine. The polypeptide is Biosynthetic arginine decarboxylase (Bacteroides fragilis (strain ATCC 25285 / DSM 2151 / CCUG 4856 / JCM 11019 / LMG 10263 / NCTC 9343 / Onslow / VPI 2553 / EN-2)).